We begin with the raw amino-acid sequence, 487 residues long: UDP-N-acetylmuramate--L-alanine ligase (487 aa).

Position 126 to 132 (126 to 132 (GTHGKTT)) interacts with ATP.

This sequence belongs to the MurCDEF family.

The protein localises to the cytoplasm. The enzyme catalyses UDP-N-acetyl-alpha-D-muramate + L-alanine + ATP = UDP-N-acetyl-alpha-D-muramoyl-L-alanine + ADP + phosphate + H(+). It participates in cell wall biogenesis; peptidoglycan biosynthesis. Its function is as follows. Cell wall formation. The protein is UDP-N-acetylmuramate--L-alanine ligase of Psychromonas ingrahamii (strain DSM 17664 / CCUG 51855 / 37).